The primary structure comprises 183 residues: Ferritin heavy chain (183 aa).

The residue at position 1 (Met-1) is an N-acetylmethionine. Thr-2 is modified (N-acetylthreonine; in Ferritin heavy chain, N-terminally processed). In terms of domain architecture, Ferritin-like diiron spans 11–160; the sequence is QNYHQDSEAA…DHVTNLRKMG (150 aa). Residues Glu-28, Glu-63, His-66, Glu-108, and Gln-142 each contribute to the Fe cation site. Ser-179 and Ser-183 each carry phosphoserine.

The protein belongs to the ferritin family. In terms of assembly, oligomer of 24 subunits. There are two types of subunits: L (light) chain and H (heavy) chain. The major chain can be light or heavy, depending on the species and tissue type. The functional molecule forms a roughly spherical shell with a diameter of 12 nm and contains a central cavity into which the insoluble mineral iron core is deposited. Interacts with NCOA4; NCOA4 promotes targeting of the iron-binding ferritin complex to autolysosomes following starvation or iron depletion.

It is found in the cytoplasm. The protein resides in the lysosome. Its subcellular location is the cytoplasmic vesicle. The protein localises to the autophagosome. It carries out the reaction 4 Fe(2+) + O2 + 4 H(+) = 4 Fe(3+) + 2 H2O. In terms of biological role, stores iron in a soluble, non-toxic, readily available form. Important for iron homeostasis. Has ferroxidase activity. Iron is taken up in the ferrous form and deposited as ferric hydroxides after oxidation. Also plays a role in delivery of iron to cells. Mediates iron uptake in capsule cells of the developing kidney. Delivery to lysosomes is mediated by the cargo receptor NCOA4 for autophagic degradation and release of iron. The chain is Ferritin heavy chain (FTH1) from Canis lupus familiaris (Dog).